The chain runs to 615 residues: UvrABC system protein C (615 aa).

One can recognise a GIY-YIG domain in the interval 14 to 91; the sequence is TSPGCYIHKD…IKENKPKYNI (78 aa). In terms of domain architecture, UVR spans 196 to 231; sequence NKIIDELKGKMAAAAQTMEFERAAEYRDLIQAIGTL.

It belongs to the UvrC family. In terms of assembly, interacts with UvrB in an incision complex.

It is found in the cytoplasm. Its function is as follows. The UvrABC repair system catalyzes the recognition and processing of DNA lesions. UvrC both incises the 5' and 3' sides of the lesion. The N-terminal half is responsible for the 3' incision and the C-terminal half is responsible for the 5' incision. In Streptococcus pneumoniae (strain JJA), this protein is UvrABC system protein C.